We begin with the raw amino-acid sequence, 259 residues long: Complement factor D (259 aa).

Positions 1–21 (MADRSLHLVVLILLGTALCAA) are cleaved as a signal peptide. Residues 22 to 26 (QPRGR) constitute a propeptide, activation peptide. Residues 27-254 (ILRGQEAPSH…YVAWIDGVMA (228 aa)) enclose the Peptidase S1 domain. C52 and C68 form a disulfide bridge. Catalysis depends on charge relay system residues H67 and D115. Disulfide bonds link C149–C215, C180–C196, and C205–C230. S209 serves as the catalytic Charge relay system. Positions 224 to 228 (TSGSR) are self-inhibitor loop.

The protein belongs to the peptidase S1 family. In terms of processing, CFD is activated by the removal of 5 residues at the N-terminus, named activation peptide, by the MASP-3 isoform of MASP1.

It is found in the secreted. The catalysed reaction is Selective cleavage of Arg-|-Lys bond in complement factor B when in complex with complement subcomponent C3b or with cobra venom factor.. Its activity is regulated as follows. Circulates in plasma in a mature but self-inhibited form. Activated by factor B (CFB), which displaces the self-inhibition loop. Associates with CFB complexed with complement C3b. In terms of biological role, serine protease that initiates the alternative pathway of the complement system, a cascade of proteins that leads to phagocytosis and breakdown of pathogens and signaling that strengthens the adaptive immune system. In contrast to other complement pathways (classical, lectin and GZMK) that are directly activated by pathogens or antigen-antibody complexes, the alternative complement pathway is initiated by the spontaneous hydrolysis of complement C3. The alternative complement pathway acts as an amplification loop that enhances complement activation by mediating the formation of C3 and C5 convertases. Activated CFD cleaves factor B (CFB) when the latter is complexed with complement C3b, activating the C3 convertase of the alternative pathway. The chain is Complement factor D (CFD) from Bos taurus (Bovine).